A 402-amino-acid polypeptide reads, in one-letter code: Enoyl-[acyl-carrier-protein] reductase [NADH] (402 aa).

NAD(+)-binding positions include 48–53, 74–75, 111–112, and 140–141; these read GASSGY, FE, DA, and LA. Tyr-226 is a binding site for substrate. Tyr-236 acts as the Proton donor in catalysis. Residues Lys-245 and 274-276 contribute to the NAD(+) site; that span reads VVT.

Belongs to the TER reductase family. Monomer.

It catalyses the reaction a 2,3-saturated acyl-[ACP] + NAD(+) = a (2E)-enoyl-[ACP] + NADH + H(+). It participates in lipid metabolism; fatty acid biosynthesis. Involved in the final reduction of the elongation cycle of fatty acid synthesis (FAS II). Catalyzes the reduction of a carbon-carbon double bond in an enoyl moiety that is covalently linked to an acyl carrier protein (ACP). This Xanthomonas axonopodis pv. citri (strain 306) protein is Enoyl-[acyl-carrier-protein] reductase [NADH].